We begin with the raw amino-acid sequence, 56 residues long: Small ribosomal subunit protein eS31 (56 aa).

Zn(2+) is bound by residues Cys28, Cys31, Cys46, and Cys49. Residues 28 to 49 (CPRCGPGVFMANHKDRWSCGRC) form a C4-type zinc finger.

It belongs to the eukaryotic ribosomal protein eS31 family. In terms of assembly, part of the 30S ribosomal subunit. Requires Zn(2+) as cofactor.

In Thermococcus gammatolerans (strain DSM 15229 / JCM 11827 / EJ3), this protein is Small ribosomal subunit protein eS31.